The sequence spans 380 residues: Putative T-box protein 40 (380 aa).

A DNA-binding region (T-box) is located at residues 11–192 (MAEEDRWLTQ…KNATFENRLD (182 aa)). The interval 188–215 (ENRLDGGNKRKNTNSREEPSSKRSKNET) is disordered. A compositionally biased stretch (basic and acidic residues) spans 189 to 215 (NRLDGGNKRKNTNSREEPSSKRSKNET).

It is found in the nucleus. The chain is Putative T-box protein 40 (tbx-40) from Caenorhabditis elegans.